A 163-amino-acid polypeptide reads, in one-letter code: uncharacterized protein (163 aa).

Positions 128 to 163 are disordered; it reads PKKEKIKKAKRKKKGAKRASKKQKAKSKSARKSRRV. Residues 129-163 show a composition bias toward basic residues; sequence KKEKIKKAKRKKKGAKRASKKQKAKSKSARKSRRV.

This is an uncharacterized protein from Sulfurisphaera tokodaii (strain DSM 16993 / JCM 10545 / NBRC 100140 / 7) (Sulfolobus tokodaii).